A 559-amino-acid chain; its full sequence is Peptidyl-prolyl isomerase cwc27 (559 aa).

Positions 11–184 constitute a PPIase cyclophilin-type domain; it reads PTASATLHTT…YPVKVVSCEV (174 aa). Disordered regions lie at residues 201 to 395, 413 to 449, and 518 to 559; these read ATAP…GFSS, ESADAKSGPHGKTSISASDTTKYTSQAKSNTEPEDEE, and PRER…REKP. The segment covering 261-273 has biased composition (basic and acidic residues); it reads APKKTSPEAEQQT. The segment covering 305-319 has biased composition (pro residues); that stretch reads LPDPESPARSPPQSP. 2 stretches are compositionally biased toward polar residues: residues 384–394 and 425–442; these read GSSTNGVTGFS and TSISASDTTKYTSQAKSN.

The protein belongs to the cyclophilin-type PPIase family. CWC27 subfamily. Associated with the spliceosome.

The protein resides in the cytoplasm. It is found in the nucleus. It carries out the reaction [protein]-peptidylproline (omega=180) = [protein]-peptidylproline (omega=0). Its function is as follows. PPIases accelerate the folding of proteins. It catalyzes the cis-trans isomerization of proline imidic peptide bonds in oligopeptides. Involved in pre-mRNA splicing. The protein is Peptidyl-prolyl isomerase cwc27 (cwc27) of Aspergillus fumigatus (strain ATCC MYA-4609 / CBS 101355 / FGSC A1100 / Af293) (Neosartorya fumigata).